We begin with the raw amino-acid sequence, 352 residues long: Selenide, water dikinase (352 aa).

Cys-23 is a catalytic residue. ATP-binding positions include Lys-26 and 54 to 56 (SRD). Residue Asp-57 participates in Mg(2+) binding. Residues Asp-74, Asp-97, and 145–147 (GHS) contribute to the ATP site. Asp-97 contacts Mg(2+). Position 233 (Asp-233) interacts with Mg(2+).

Belongs to the selenophosphate synthase 1 family. Class I subfamily. In terms of assembly, homodimer. The cofactor is Mg(2+).

The enzyme catalyses hydrogenselenide + ATP + H2O = selenophosphate + AMP + phosphate + 2 H(+). Its function is as follows. Synthesizes selenophosphate from selenide and ATP. The chain is Selenide, water dikinase from Shewanella sp. (strain ANA-3).